The sequence spans 321 residues: Phospho-N-acetylmuramoyl-pentapeptide-transferase (321 aa).

The next 10 helical transmembrane spans lie at 1–21 (MIFVYALLALVITFVLVPVLI), 50–70 (MGGLTFLLSIVITSLVAIIFV), 76–96 (IILLLFVTIGFGLIGFIDDYI), 112–132 (FLAQIGIAIIFFVLSNVFHLV), 140–160 (IPFTNVAIPLSFAYVIFIVFL), 176–196 (GLATGLSIIGFTMYAIMSFVL), 200–220 (AIGIFCIIMLFALLGFLPYNI), 225–245 (VFMGDTGSLALGGIFATISIM), 250–270 (LSLIFIGLVFVIETLSVMLQV), and 300–320 (VVTVFWAVGLISGLIGLWIGV).

Belongs to the glycosyltransferase 4 family. MraY subfamily. It depends on Mg(2+) as a cofactor.

The protein localises to the cell membrane. It carries out the reaction UDP-N-acetyl-alpha-D-muramoyl-L-alanyl-gamma-D-glutamyl-L-lysyl-D-alanyl-D-alanine + di-trans,octa-cis-undecaprenyl phosphate = Mur2Ac(oyl-L-Ala-gamma-D-Glu-L-Lys-D-Ala-D-Ala)-di-trans,octa-cis-undecaprenyl diphosphate + UMP. The protein operates within cell wall biogenesis; peptidoglycan biosynthesis. Functionally, catalyzes the initial step of the lipid cycle reactions in the biosynthesis of the cell wall peptidoglycan: transfers peptidoglycan precursor phospho-MurNAc-pentapeptide from UDP-MurNAc-pentapeptide onto the lipid carrier undecaprenyl phosphate, yielding undecaprenyl-pyrophosphoryl-MurNAc-pentapeptide, known as lipid I. This Staphylococcus aureus (strain bovine RF122 / ET3-1) protein is Phospho-N-acetylmuramoyl-pentapeptide-transferase.